The following is a 149-amino-acid chain: Nucleoside diphosphate kinase (149 aa).

Lysine 9, phenylalanine 57, arginine 85, threonine 91, arginine 102, and asparagine 112 together coordinate ATP. The active-site Pros-phosphohistidine intermediate is the histidine 115.

Belongs to the NDK family. In terms of assembly, homotetramer. Mg(2+) is required as a cofactor.

It localises to the cytoplasm. The catalysed reaction is a 2'-deoxyribonucleoside 5'-diphosphate + ATP = a 2'-deoxyribonucleoside 5'-triphosphate + ADP. The enzyme catalyses a ribonucleoside 5'-diphosphate + ATP = a ribonucleoside 5'-triphosphate + ADP. Functionally, major role in the synthesis of nucleoside triphosphates other than ATP. The ATP gamma phosphate is transferred to the NDP beta phosphate via a ping-pong mechanism, using a phosphorylated active-site intermediate. This Microcystis aeruginosa (strain NIES-843 / IAM M-2473) protein is Nucleoside diphosphate kinase.